A 447-amino-acid chain; its full sequence is Biotin carboxylase (447 aa).

A Biotin carboxylation domain is found at 1–447; it reads MKFDKILIAN…STSFVQEMNK (447 aa). ATP contacts are provided by residues Lys-117, Lys-159, 165 to 166, 201 to 204, and His-209; these read GG and EKFI. The 198-residue stretch at 121–318 folds into the ATP-grasp domain; the sequence is KETMQKAGVP…LLVEQIRIAQ (198 aa). Lys-238 contacts hydrogencarbonate. ATP contacts are provided by Glu-276 and Glu-289. Mg(2+) contacts are provided by Glu-276, Glu-289, and Asn-291. Mn(2+) contacts are provided by Glu-276, Glu-289, and Asn-291. 3 residues coordinate hydrogencarbonate: Arg-293, Val-296, and Arg-339. Arg-293 is a catalytic residue. Arg-339 provides a ligand contact to biotin.

Acetyl-CoA carboxylase is a heterohexamer of biotin carboxyl carrier protein, biotin carboxylase and the two subunits of carboxyl transferase in a 2:2 complex. The cofactor is Mg(2+). Mn(2+) is required as a cofactor.

It catalyses the reaction N(6)-biotinyl-L-lysyl-[protein] + hydrogencarbonate + ATP = N(6)-carboxybiotinyl-L-lysyl-[protein] + ADP + phosphate + H(+). It functions in the pathway lipid metabolism; malonyl-CoA biosynthesis; malonyl-CoA from acetyl-CoA: step 1/1. This protein is a component of the acetyl coenzyme A carboxylase complex; first, biotin carboxylase catalyzes the carboxylation of the carrier protein and then the transcarboxylase transfers the carboxyl group to form malonyl-CoA. In Nostoc sp. (strain PCC 7120 / SAG 25.82 / UTEX 2576), this protein is Biotin carboxylase (accC).